Reading from the N-terminus, the 144-residue chain is Large-conductance mechanosensitive channel (144 aa).

A run of 2 helical transmembrane segments spans residues 16–36 (VIDLAVGVIIGAAFGKIVDSV) and 86–106 (GNFLTIVVNFVILAFIIFMMV).

It belongs to the MscL family. In terms of assembly, homopentamer.

Its subcellular location is the cell inner membrane. Channel that opens in response to stretch forces in the membrane lipid bilayer. May participate in the regulation of osmotic pressure changes within the cell. The chain is Large-conductance mechanosensitive channel from Cupriavidus metallidurans (strain ATCC 43123 / DSM 2839 / NBRC 102507 / CH34) (Ralstonia metallidurans).